A 257-amino-acid chain; its full sequence is GTP cyclohydrolase FolE2 (257 aa).

This sequence belongs to the GTP cyclohydrolase IV family.

The enzyme catalyses GTP + H2O = 7,8-dihydroneopterin 3'-triphosphate + formate + H(+). It participates in cofactor biosynthesis; 7,8-dihydroneopterin triphosphate biosynthesis; 7,8-dihydroneopterin triphosphate from GTP: step 1/1. Functionally, converts GTP to 7,8-dihydroneopterin triphosphate. The protein is GTP cyclohydrolase FolE2 of Dictyoglomus turgidum (strain DSM 6724 / Z-1310).